Here is a 341-residue protein sequence, read N- to C-terminus: Serine/threonine-protein kinase PDIK1L (341 aa).

The 327-residue stretch at 8–334 (YDLIREVGRG…LELRLVQIAF (327 aa)) folds into the Protein kinase domain. Residues 14–22 (VGRGSYGVV) and K37 contribute to the ATP site. Residue D164 is the Proton acceptor of the active site.

It belongs to the protein kinase superfamily. Ser/Thr protein kinase family.

The protein resides in the nucleus. The catalysed reaction is L-seryl-[protein] + ATP = O-phospho-L-seryl-[protein] + ADP + H(+). It carries out the reaction L-threonyl-[protein] + ATP = O-phospho-L-threonyl-[protein] + ADP + H(+). This Mus musculus (Mouse) protein is Serine/threonine-protein kinase PDIK1L (Pdik1l).